A 541-amino-acid polypeptide reads, in one-letter code: EH domain-containing protein 4 (541 aa).

N-acetylmethionine is present on methionine 1. A Dynamin-type G domain is found at 58 to 289 (FENKPMILLV…DLFRDIQSLP (232 aa)). A G1 motif region spans residues 68–75 (GQYSTGKT). Residue 68–75 (GQYSTGKT) coordinates ATP. The tract at residues 94-95 (EP) is G2 motif. A G3 motif region spans residues 156 to 159 (DSPG). Residue serine 162 is modified to Phosphoserine. Residues 222–225 (NKAD) form a G4 motif region. Residue lysine 223 coordinates ATP. Position 246 (valine 246) is a region of interest, G5 motif. Tryptophan 261 provides a ligand contact to ATP. Residues 447–535 (DKPVYDELFY…PHLVPPSHRK (89 aa)) enclose the EH domain. Tyrosine 451 carries the phosphotyrosine modification. Position 459 is a phosphoserine (serine 459). The 36-residue stretch at 479-514 (LPNSVLGKIWKLADCDCDGMLDEEEFALAKHLIKIK) folds into the EF-hand domain. Ca(2+)-binding residues include aspartate 492, aspartate 494, aspartate 496, methionine 498, and glutamate 503.

Belongs to the TRAFAC class dynamin-like GTPase superfamily. Dynamin/Fzo/YdjA family. EHD subfamily. Homooligomer, and heterooligomer with EHD1, EHD2 and EHD3. Forms a complex with EHD4 and MICALL1; the complex controls CDH5 trafficking and coordinates angiogenesis. As to expression, highly expressed in pancreas and heart.

It localises to the early endosome membrane. Its subcellular location is the recycling endosome membrane. The protein localises to the cell membrane. It is found in the cell junction. The protein resides in the adherens junction. ATP- and membrane-binding protein that probably controls membrane reorganization/tubulation upon ATP hydrolysis. Plays a role in early endosomal transport. During sprouting angiogenesis, in complex with PACSIN2 and MICALL1, forms recycling endosome-like tubular structure at asymmetric adherens junctions to control CDH5 trafficking. This chain is EH domain-containing protein 4, found in Homo sapiens (Human).